Reading from the N-terminus, the 61-residue chain is Large ribosomal subunit protein bL28 (61 aa).

A disordered region spans residues M1–S27. Residues K9–S27 are compositionally biased toward polar residues.

The protein belongs to the bacterial ribosomal protein bL28 family.

The protein is Large ribosomal subunit protein bL28 of Lactobacillus delbrueckii subsp. bulgaricus (strain ATCC 11842 / DSM 20081 / BCRC 10696 / JCM 1002 / NBRC 13953 / NCIMB 11778 / NCTC 12712 / WDCM 00102 / Lb 14).